The chain runs to 337 residues: UDP-3-O-acylglucosamine N-acyltransferase (337 aa).

The active-site Proton acceptor is the H238.

Belongs to the transferase hexapeptide repeat family. LpxD subfamily. In terms of assembly, homotrimer.

It carries out the reaction a UDP-3-O-[(3R)-3-hydroxyacyl]-alpha-D-glucosamine + a (3R)-hydroxyacyl-[ACP] = a UDP-2-N,3-O-bis[(3R)-3-hydroxyacyl]-alpha-D-glucosamine + holo-[ACP] + H(+). The protein operates within bacterial outer membrane biogenesis; LPS lipid A biosynthesis. In terms of biological role, catalyzes the N-acylation of UDP-3-O-acylglucosamine using 3-hydroxyacyl-ACP as the acyl donor. Is involved in the biosynthesis of lipid A, a phosphorylated glycolipid that anchors the lipopolysaccharide to the outer membrane of the cell. This Xanthomonas euvesicatoria pv. vesicatoria (strain 85-10) (Xanthomonas campestris pv. vesicatoria) protein is UDP-3-O-acylglucosamine N-acyltransferase.